A 151-amino-acid chain; its full sequence is Regulatory protein RecX (151 aa).

Belongs to the RecX family.

Its subcellular location is the cytoplasm. Modulates RecA activity. The protein is Regulatory protein RecX of Prosthecochloris aestuarii (strain DSM 271 / SK 413).